The following is a 358-amino-acid chain: Psilocybin cluster transcription regulator (358 aa).

Disordered regions lie at residues Met-1–Met-40 and Ser-62–Arg-212. Pro residues predominate over residues Pro-18–Ala-29. Residues Gln-79–Gly-91 are compositionally biased toward polar residues. The span at Pro-179 to Thr-190 shows a compositional bias: low complexity. The span at Glu-195 to Arg-209 shows a compositional bias: basic and acidic residues. Positions Gln-199–Arg-212 are basic motif. Positions Gln-199 to Leu-249 constitute a bHLH domain. A helix-loop-helix motif region spans residues Gly-213–Leu-249. Residues Lys-264–Asn-306 are a coiled coil. Residues Val-308–Glu-358 are disordered. Residues Gly-331–Ala-346 are compositionally biased toward low complexity. The segment covering Glu-347–Glu-358 has biased composition (basic and acidic residues).

It localises to the nucleus. Transcription factor that may regulate the expression of the gene cluster that mediates the biosynthesis of psilocybin, a psychotropic tryptamine-derived natural product. In Psilocybe cubensis (Psychedelic mushroom), this protein is Psilocybin cluster transcription regulator.